Here is a 269-residue protein sequence, read N- to C-terminus: Spermatogenesis-associated serine-rich protein 1 (269 aa).

Residues 1–14 (MESSKDTQHGDALE) show a composition bias toward basic and acidic residues. The disordered stretch occupies residues 1–92 (MESSKDTQHG…SKVSLPEIPK (92 aa)). Polar residues predominate over residues 18–38 (CLANRTSSRQNKRTSLSSSDG). A Phosphothreonine modification is found at Thr54. Positions 67-86 (SSSSSSSSSSAQSNRSSKVS) are enriched in low complexity. Residues Ser72, Ser75, and Ser82 each carry the phosphoserine modification.

The protein is Spermatogenesis-associated serine-rich protein 1 (Spats1) of Mus musculus (Mouse).